Reading from the N-terminus, the 476-residue chain is Acidic leucine-rich nuclear phosphoprotein 32-related protein 1 (476 aa).

3 LRR repeats span residues 51-72 (SLEHLSIAGVGVASLAGFPRLR), 73-92 (NLTRLTLSDNRIAGGLDHLV), and 98-119 (SLRDLDLSNNRIQDVGDLSPLA). Residues 131-169 (CPVTRVKDYRSKVFGMIRTLKYLDKMDADENERPESDDD) form the LRRCT domain. Residues 157 to 476 (DADENERPES…VEDLRPFKHH (320 aa)) are disordered. Acidic residues-rich tracts occupy residues 165–194 (ESDDDDDDGDGDGDGEEEEDDDDDEDEDPG), 222–232 (DVDEDESDADE), 252–289 (GDEDEYVEEEDDDDEEDYEEEDDLGEEIDEDGDDEDAV), 299–329 (SDEEEDGIEEEDEEEDEDEEEVEDDGEEAEP), 353–371 (EGEDEDENGEIGEEDEERL), 379–396 (EGNDDDEEDVDDEDEDTE), 415–436 (DAAEADDADEDRDEVDDDDDGG), and 458–467 (GDDDEDDDGV).

Belongs to the ANP32 family.

In Oryza sativa subsp. japonica (Rice), this protein is Acidic leucine-rich nuclear phosphoprotein 32-related protein 1.